Reading from the N-terminus, the 202-residue chain is Putative NAD(P)H nitroreductase YodC (202 aa).

Residues 11 to 13, 68 to 70, 155 to 156, and Arg192 each bind FMN; these read RAS, QKQ, and GG.

It belongs to the nitroreductase family. FMN serves as cofactor.

Its subcellular location is the cytoplasm. Its function is as follows. Putative nitroreductase that may contribute to the degradation of aromatic compounds. This is Putative NAD(P)H nitroreductase YodC (yodC) from Bacillus subtilis (strain 168).